A 397-amino-acid polypeptide reads, in one-letter code: MAKQKFERTKPHVNIGTIGHIDHGKTTLTAAITKVLHDAHPDLNPFTPFDQIDKAPEEKARGITISIAHVEYQTDKRHYAHVDCPGHADYIKNMITGAAQMDGAILVVSATDGPMPQTKEHVLLARQVGVPYIVVALNKADMVDDEEILELVELEVRELLSSYEFPGDDVPVIRVSALKALEGDKEWGAKLLELMAAVDDSIPEPQRDIDRPFLMPIEDVFTITGRGTVVTGRVERGIVKVNETVEIVGIKPETTTTTVTGVEMFRKLLDEGRAGDNVGLLLRGIKREDVERGQVIVKPKTITPHTVFEARVYILNKDEGGRHTPFFKNYRPQFYFRTTDVTGVVTLPEGTEMVMPGDNTEMTVELIQPIAMEEGLRFAIREGGRTVGAGQVTKVLK.

The 197-residue stretch at 10–206 (KPHVNIGTIG…AVDDSIPEPQ (197 aa)) folds into the tr-type G domain. Positions 19 to 26 (GHIDHGKT) are G1. 19–26 (GHIDHGKT) provides a ligand contact to GTP. Residue T26 coordinates Mg(2+). Positions 62–66 (GITIS) are G2. The interval 83 to 86 (DCPG) is G3. GTP contacts are provided by residues 83–87 (DCPGH) and 138–141 (NKAD). Positions 138–141 (NKAD) are G4. The tract at residues 176-178 (SAL) is G5.

Belongs to the TRAFAC class translation factor GTPase superfamily. Classic translation factor GTPase family. EF-Tu/EF-1A subfamily. Monomer.

The protein localises to the cytoplasm. The catalysed reaction is GTP + H2O = GDP + phosphate + H(+). GTP hydrolase that promotes the GTP-dependent binding of aminoacyl-tRNA to the A-site of ribosomes during protein biosynthesis. In Frankia alni (strain DSM 45986 / CECT 9034 / ACN14a), this protein is Elongation factor Tu.